Here is a 508-residue protein sequence, read N- to C-terminus: Lysine-specific permease LysP (508 aa).

The next 12 membrane-spanning stretches (helical) occupy residues 43–63 (SMIA…GDVI), 66–86 (AGPF…YFLM), 112–132 (PAFG…TVAV), 144–164 (WLPD…VFSI), 184–204 (ITVV…IMGG), 219–239 (FVGG…LLVA), 270–290 (IFWR…AIIP), 314–334 (VGFS…VVSA), 367–387 (IPFI…LTSI), 393–413 (FTLL…GIAI), 436–456 (AKLF…VTLG), and 467–487 (WVQG…YLGY).

The protein belongs to the amino acid-polyamine-organocation (APC) superfamily. Amino acid transporter (AAT) (TC 2.A.3.1) family.

The protein resides in the cell membrane. It catalyses the reaction L-lysine(out) + H(+)(out) = L-lysine(in) + H(+)(in). Its function is as follows. Permease involved in lysine uptake. The polypeptide is Lysine-specific permease LysP (Lactococcus lactis subsp. cremoris (strain MG1363)).